Here is an 87-residue protein sequence, read N- to C-terminus: Putative regulatory protein GK1166 (87 aa).

This sequence belongs to the RemA family.

This chain is Putative regulatory protein GK1166, found in Geobacillus kaustophilus (strain HTA426).